A 213-amino-acid polypeptide reads, in one-letter code: Guanylate kinase (213 aa).

Residues Gly10 to His189 enclose the Guanylate kinase-like domain. Residue Ala17–Thr24 participates in ATP binding.

Belongs to the guanylate kinase family.

The protein resides in the cytoplasm. It carries out the reaction GMP + ATP = GDP + ADP. Essential for recycling GMP and indirectly, cGMP. This is Guanylate kinase (gmk) from Caulobacter vibrioides (strain ATCC 19089 / CIP 103742 / CB 15) (Caulobacter crescentus).